The following is a 387-amino-acid chain: MNIDSLKNEWEELNKEFAELESCNRRYIELLEQLHSHQQICFNEIKHQRYRMNQITTSLRQFKGPVPAEDKEKVDDLHKMTLKRKAQLHEIEQSLPAKSGRYLQIILGDVNVSILNRNDKVRYKDDYEKFKLILNVIGLIMAFFNLIFNYRALELAFIFLLVWYYCTLTIRESILKVNGSRIKGWWRAHHFISTVAAGVLLVWPQGEHWQIFRMQFMYFNVYISIVQYLQFGYQKGLLYRLKALGERHNMDITIEGFHSWMWRGLSFLLPFLFIGYGYQAYNAWTLYKLAYSPPDAPWHVSVMSGLFLLLFVGNMATTLWVVPEKIRERAKERYRLQSMGKSMKLRKEMKNSASDLDLSSGSKLSPTATTTTSIATATQTPAEKKET.

The stretch at 1–39 forms a coiled coil; the sequence is MNIDSLKNEWEELNKEFAELESCNRRYIELLEQLHSHQQ. Residue N111 is glycosylated (N-linked (GlcNAc...) asparagine). Helical transmembrane passes span 130–150, 155–175, 191–211, 216–238, 264–284, and 302–322; these read FKLILNVIGLIMAFFNLIFNY, LAFIFLLVWYYCTLTIRESIL, FISTVAAGVLLVWPQGEHWQI, FMYFNVYISIVQYLQFGYQKGLL, GLSFLLPFLFIGYGYQAYNAW, and VMSGLFLLLFVGNMATTLWVV. Positions 346-387 are disordered; that stretch reads RKEMKNSASDLDLSSGSKLSPTATTTTSIATATQTPAEKKET. A phosphoserine mark is found at S352, S354, and S365. Residues 352–381 show a composition bias toward low complexity; sequence SASDLDLSSGSKLSPTATTTTSIATATQTP.

The protein belongs to the TMEM120 family.

The protein resides in the membrane. The sequence is that of Transmembrane protein 120 homolog from Drosophila melanogaster (Fruit fly).